The chain runs to 219 residues: Small ribosomal subunit protein uS3 (219 aa).

The 70-residue stretch at 39–108 (IKEFIKKNYF…KVTVKVQEIK (70 aa)) folds into the KH type-2 domain.

Belongs to the universal ribosomal protein uS3 family. As to quaternary structure, part of the 30S ribosomal subunit. Forms a tight complex with proteins S10 and S14.

In terms of biological role, binds the lower part of the 30S subunit head. Binds mRNA in the 70S ribosome, positioning it for translation. This Fusobacterium nucleatum subsp. nucleatum (strain ATCC 25586 / DSM 15643 / BCRC 10681 / CIP 101130 / JCM 8532 / KCTC 2640 / LMG 13131 / VPI 4355) protein is Small ribosomal subunit protein uS3.